Here is a 449-residue protein sequence, read N- to C-terminus: Ribulose bisphosphate carboxylase large chain (449 aa).

Lysine 7 is modified (N6,N6,N6-trimethyllysine). Asparagine 116 and threonine 166 together coordinate substrate. The active-site Proton acceptor is the lysine 168. Lysine 170 is a substrate binding site. Mg(2+) is bound by residues lysine 194, aspartate 196, and glutamate 197. Position 194 is an N6-carboxylysine (lysine 194). Histidine 287 acts as the Proton acceptor in catalysis. Positions 288, 320, and 372 each coordinate substrate.

It belongs to the RuBisCO large chain family. Type I subfamily. As to quaternary structure, heterohexadecamer of 8 large chains and 8 small chains; disulfide-linked. The disulfide link is formed within the large subunit homodimers. Mg(2+) is required as a cofactor. Post-translationally, the disulfide bond which can form in the large chain dimeric partners within the hexadecamer appears to be associated with oxidative stress and protein turnover.

The protein localises to the plastid. Its subcellular location is the chloroplast. It catalyses the reaction 2 (2R)-3-phosphoglycerate + 2 H(+) = D-ribulose 1,5-bisphosphate + CO2 + H2O. The enzyme catalyses D-ribulose 1,5-bisphosphate + O2 = 2-phosphoglycolate + (2R)-3-phosphoglycerate + 2 H(+). In terms of biological role, ruBisCO catalyzes two reactions: the carboxylation of D-ribulose 1,5-bisphosphate, the primary event in carbon dioxide fixation, as well as the oxidative fragmentation of the pentose substrate in the photorespiration process. Both reactions occur simultaneously and in competition at the same active site. This Liriope muscari (Big blue lilyturf) protein is Ribulose bisphosphate carboxylase large chain.